Reading from the N-terminus, the 214-residue chain is Endoplasmic reticulum vesicle protein 25 (214 aa).

An N-terminal signal peptide occupies residues 1–20 (MRSISTLLFIISTFISLVSA). At 21 to 183 (LQLAIPATTN…TNESTNSRVK (163 aa)) the chain is on the lumenal side. The region spanning 33–124 (PFCIRDFVQE…VREIELDVES (92 aa)) is the GOLD domain. The helical transmembrane segment at 184–204 (WFSILVITSLVGLGAWQVQYL) threads the bilayer. Residues 205-214 (RHYFKVKHII) are Cytoplasmic-facing.

This sequence belongs to the EMP24/GP25L family.

It is found in the endoplasmic reticulum membrane. The protein resides in the golgi apparatus membrane. Its function is as follows. Constituent of COPII-coated endoplasmic reticulum-derived transport vesicles. Required for efficient transport of a subset of secretory proteins to the Golgi. Facilitates retrograde transport from the Golgi to the endoplasmic reticulum. This Debaryomyces hansenii (strain ATCC 36239 / CBS 767 / BCRC 21394 / JCM 1990 / NBRC 0083 / IGC 2968) (Yeast) protein is Endoplasmic reticulum vesicle protein 25 (ERV25).